The following is a 162-amino-acid chain: G/U mismatch-specific DNA glycosylase (162 aa).

Belongs to the uracil-DNA glycosylase (UDG) superfamily. TDG/mug family. In terms of assembly, binds DNA as a monomer.

It is found in the cytoplasm. The enzyme catalyses Specifically hydrolyzes mismatched double-stranded DNA and polynucleotides, releasing free uracil.. In terms of biological role, excises ethenocytosine and uracil, which can arise by alkylation or deamination of cytosine, respectively, from the corresponding mispairs with guanine in ds-DNA. It is capable of hydrolyzing the carbon-nitrogen bond between the sugar-phosphate backbone of the DNA and the mispaired base. The complementary strand guanine functions in substrate recognition. Required for DNA damage lesion repair in stationary-phase cells. In Serratia proteamaculans (strain 568), this protein is G/U mismatch-specific DNA glycosylase.